Consider the following 191-residue polypeptide: Cytochrome c biogenesis ATP-binding export protein CcmA (191 aa).

The region spanning 2-190 is the ABC transporter domain; that stretch reads LSLHQLQFKN…SIKSAQILRI (189 aa). 29 to 36 provides a ligand contact to ATP; it reads GANGCGKS.

This sequence belongs to the ABC transporter superfamily. CcmA exporter (TC 3.A.1.107) family. The complex is composed of two ATP-binding proteins (CcmA) and two transmembrane proteins (CcmB).

It localises to the cell inner membrane. It carries out the reaction heme b(in) + ATP + H2O = heme b(out) + ADP + phosphate + H(+). In terms of biological role, part of the ABC transporter complex CcmAB involved in the biogenesis of c-type cytochromes; once thought to export heme, this seems not to be the case, but its exact role is uncertain. Responsible for energy coupling to the transport system. This Rickettsia conorii (strain ATCC VR-613 / Malish 7) protein is Cytochrome c biogenesis ATP-binding export protein CcmA.